The sequence spans 136 residues: Gilles de la Tourette syndrome chromosomal region candidate gene 1 protein (136 aa).

The helical transmembrane segment at alanine 73 to cysteine 93 threads the bilayer.

Its subcellular location is the membrane. The protein is Gilles de la Tourette syndrome chromosomal region candidate gene 1 protein (GTSCR1) of Homo sapiens (Human).